The chain runs to 131 residues: Beta/delta-urticatoxin-Dm2a (131 aa).

The first 24 residues, 1–24 (MKSSATVVLLVAAVTAAMVMSSSA), serve as a signal peptide directing secretion. The propeptide occupies 25–69 (SGDAVMIDEHNNIMTSVEGKRGIGSSVVANGGNRKMANVLLSGWE). 6 disulfides stabilise this stretch: Cys-72/Cys-88, Cys-79/Cys-93, Cys-87/Cys-101, Cys-103/Cys-117, Cys-110/Cys-122, and Cys-116/Cys-130.

This sequence belongs to the urticatoxin-2 family. In terms of tissue distribution, expressed in trichomes, that are stiff epidermal hairs located on the surface of petioles and leaves.

The protein resides in the secreted. Plant defense neurotoxin that causes pain and systemic symptoms in mammals via modulation of voltage-gated sodium channels (Nav). Potent modulator of human Nav1.5/SCN5A (EC(50)=55 nM), Nav1.6/SCN8A (EC(50)=0.86 nM), and Nav1.7/SCN9A (EC(50)=208 nM), where it shifts the activation threshold to more negative potentials and delays fast inactivation. Also shifts the voltage-dependence of steady-state fast inactivation of Nav1.6/SCN8A, but not that of Nav1.5/SCN5A or Nav1.7/SCN9A. On Nav1.7/SCN9A, principally acts by binding to extracellular loops of domain IV (Nav site 3). In vivo, intraplantar injection into mice causes numerous dose-dependent, immediate, and long-lasting spontaneous pain behaviors, while no swelling is observed in the injected paw. At the highest doses tested, systemic symptoms including hypokinesia and hypersalivation are observed. The sequence is that of Beta/delta-urticatoxin-Dm2a from Dendrocnide moroides (Gympie stinging tree).